We begin with the raw amino-acid sequence, 358 residues long: Chitin synthase export chaperone (358 aa).

The next 7 membrane-spanning stretches (helical) occupy residues 49–69, 88–108, 117–137, 159–179, 185–205, 220–240, and 250–270; these read IIFQ…TVVM, FFYL…GVIP, FVAV…INGF, FVAF…WAGL, VGIF…YVVM, LGDI…LYAF, and HYLD…MMVY. The interval 321–358 is disordered; sequence ASGPGTGSGASASGYEGGHHRRESHGYTPSPNRQSLRY. The span at 347–358 shows a compositional bias: polar residues; sequence YTPSPNRQSLRY.

Belongs to the CHS7 family. As to quaternary structure, interacts with chs-3.

It localises to the endoplasmic reticulum membrane. Chaperone required for the export of the chitin synthase chs-3 from the endoplasmic reticulum. This is Chitin synthase export chaperone (csc-1) from Neurospora crassa (strain ATCC 24698 / 74-OR23-1A / CBS 708.71 / DSM 1257 / FGSC 987).